Reading from the N-terminus, the 459-residue chain is MQEKKLWGGRFSESTDAFVEEFTESISFDKELALYDIKGSMAHAKMLGKQGIIPQEDAEKIVKGLQDIEQEIKENKFVWKKELEDVHMNIEKALTDKIGKAGGKLHTGRSRNDQVITAFRLYLKENTQDIINLLEDLQRKLLEKAKEYIDVVMPAYTHLQRAQPIRAAHYFLAYLEMFQRDKERFIDNLKRIDMLPLGSGAVAGVDFPIDREYVAKELGFSQIMRNSIDATSSRDFALEFLSNCAICMANMSRFSEDMIIYSSSEFSFVELPDKLTTGSSIMPQKKNPDVLELIRGKTGRVYGNLISLLTVVKGLPLAYNRDLQEDKGPVFDSVKTIKGSIIGITKIVEGLKLNREKTQLAAGGFALATDLANYLAEKGVPFRQAHHIVGSIVGYLVNQGRELESITLEELKQFSHLFEEDALKLLSPFVVADRRKSFGGTAKEQILSQIEYWDKILNK.

This sequence belongs to the lyase 1 family. Argininosuccinate lyase subfamily.

It is found in the cytoplasm. The enzyme catalyses 2-(N(omega)-L-arginino)succinate = fumarate + L-arginine. It participates in amino-acid biosynthesis; L-arginine biosynthesis; L-arginine from L-ornithine and carbamoyl phosphate: step 3/3. The polypeptide is Argininosuccinate lyase (Sulfurihydrogenibium sp. (strain YO3AOP1)).